A 242-amino-acid polypeptide reads, in one-letter code: Sec-independent protein translocase protein TatCd (242 aa).

Transmembrane regions (helical) follow at residues 19–39 (IIVT…FVQD), 60–80 (ILWV…IPVA), and 107–127 (LFAL…PIVL). Residues 128–149 (SFLTHLSSGHFETMFTADRYFR) form an interaction with TatAd region. The helical transmembrane segment at 150-170 (FMVNLSLPFGFLFEMPLVVMF) threads the bilayer. Residues 171-187 (LTRLGILNPYRLAKARK) form an interaction with TatAd region. Helical transmembrane passes span 188 to 208 (LSYF…FISD) and 209 to 229 (FLVM…SAFV).

It belongs to the TatC family. In terms of assembly, forms a complex with TatAd. Two types of complexes exist: one composed of TatAd and TatCd, and another composed only of TatAd.

It is found in the cell membrane. In terms of biological role, part of the twin-arginine translocation (Tat) system that transports large folded proteins containing a characteristic twin-arginine motif in their signal peptide across membranes. Required for PhoD secretion. TatCd promotes membrane localization of TatAd via domain specific interactions. TatCd is required for stabile production of TatAd as well as for its maintenance. The chain is Sec-independent protein translocase protein TatCd from Bacillus subtilis (strain 168).